A 113-amino-acid chain; its full sequence is Iron-sulfur cluster insertion protein ErpA (113 aa).

Positions 41, 105, and 107 each coordinate iron-sulfur cluster.

The protein belongs to the HesB/IscA family. In terms of assembly, homodimer. Iron-sulfur cluster serves as cofactor.

In terms of biological role, required for insertion of 4Fe-4S clusters for at least IspG. The polypeptide is Iron-sulfur cluster insertion protein ErpA (Vibrio vulnificus (strain YJ016)).